Reading from the N-terminus, the 439-residue chain is Tubulin beta chain (439 aa).

The GTP site is built by Q11, E69, S138, G142, T143, G144, N204, and N226. E69 contributes to the Mg(2+) binding site.

The protein belongs to the tubulin family. As to quaternary structure, dimer of alpha and beta chains. A typical microtubule is a hollow water-filled tube with an outer diameter of 25 nm and an inner diameter of 15 nM. Alpha-beta heterodimers associate head-to-tail to form protofilaments running lengthwise along the microtubule wall with the beta-tubulin subunit facing the microtubule plus end conferring a structural polarity. Microtubules usually have 13 protofilaments but different protofilament numbers can be found in some organisms and specialized cells. Requires Mg(2+) as cofactor.

It localises to the cytoplasm. The protein resides in the cytoskeleton. In terms of biological role, tubulin is the major constituent of microtubules, a cylinder consisting of laterally associated linear protofilaments composed of alpha- and beta-tubulin heterodimers. Microtubules grow by the addition of GTP-tubulin dimers to the microtubule end, where a stabilizing cap forms. Below the cap, tubulin dimers are in GDP-bound state, owing to GTPase activity of alpha-tubulin. This chain is Tubulin beta chain (TUB2), found in Encephalitozoon cuniculi (strain GB-M1) (Microsporidian parasite).